Reading from the N-terminus, the 392-residue chain is Chorismate synthase (392 aa).

NADP(+)-binding residues include Arg39 and Arg45. FMN contacts are provided by residues 131-133 (RSS), 255-256 (NA), Gly300, 315-319 (KPIPT), and Arg341.

Belongs to the chorismate synthase family. As to quaternary structure, homotetramer. FMNH2 serves as cofactor.

The catalysed reaction is 5-O-(1-carboxyvinyl)-3-phosphoshikimate = chorismate + phosphate. Its pathway is metabolic intermediate biosynthesis; chorismate biosynthesis; chorismate from D-erythrose 4-phosphate and phosphoenolpyruvate: step 7/7. Its function is as follows. Catalyzes the anti-1,4-elimination of the C-3 phosphate and the C-6 proR hydrogen from 5-enolpyruvylshikimate-3-phosphate (EPSP) to yield chorismate, which is the branch point compound that serves as the starting substrate for the three terminal pathways of aromatic amino acid biosynthesis. This reaction introduces a second double bond into the aromatic ring system. The polypeptide is Chorismate synthase (Leuconostoc citreum (strain KM20)).